The primary structure comprises 147 residues: Large ribosomal subunit protein bL9 (147 aa).

This sequence belongs to the bacterial ribosomal protein bL9 family.

Functionally, binds to the 23S rRNA. The polypeptide is Large ribosomal subunit protein bL9 (Bacteroides fragilis (strain YCH46)).